Here is a 276-residue protein sequence, read N- to C-terminus: NH(3)-dependent NAD(+) synthetase (276 aa).

ATP is bound at residue 43–50 (GISGGVDS). Asp-49 contacts Mg(2+). Arg-146 lines the deamido-NAD(+) pocket. Position 166 (Thr-166) interacts with ATP. Residue Glu-171 participates in Mg(2+) binding. Lys-179 and Asp-186 together coordinate deamido-NAD(+). The ATP site is built by Lys-195 and Thr-217. Position 266–267 (266–267 (HK)) interacts with deamido-NAD(+).

This sequence belongs to the NAD synthetase family. Homodimer.

It catalyses the reaction deamido-NAD(+) + NH4(+) + ATP = AMP + diphosphate + NAD(+) + H(+). The protein operates within cofactor biosynthesis; NAD(+) biosynthesis; NAD(+) from deamido-NAD(+) (ammonia route): step 1/1. In terms of biological role, catalyzes the ATP-dependent amidation of deamido-NAD to form NAD. Uses ammonia as a nitrogen source. The polypeptide is NH(3)-dependent NAD(+) synthetase (Vibrio cholerae serotype O1 (strain ATCC 39541 / Classical Ogawa 395 / O395)).